Consider the following 323-residue polypeptide: Aquaporin-4 (323 aa).

The Cytoplasmic segment spans residues 1 to 36 (MSDGAAARRWGKCGPPCSRESIMVAFKGVWTQAFWK). Residues cysteine 13 and cysteine 17 are each lipidated (S-palmitoyl cysteine). A helical membrane pass occupies residues 37–57 (AVTAEFLAMLIFVLLSVGSTI). Topologically, residues 58–69 (NWGGSENPLPVD) are extracellular. A helical transmembrane segment spans residues 70 to 89 (MVLISLCFGLSIATMVQCFG). The Cytoplasmic segment spans residues 90 to 93 (HISG). Positions 94–101 (GHINPAVT) form an intramembrane region, discontinuously helical. Positions 97–99 (NPA) match the NPA 1 motif. At 102–115 (VAMVCTRKISIAKS) the chain is on the cytoplasmic side. Serine 111 carries the phosphoserine; by PKG modification. A helical membrane pass occupies residues 116 to 136 (VFYITAQCLGAIIGAGILYLV). The Extracellular portion of the chain corresponds to 137–155 (TPPSVVGGLGVTTVHGNLT). Asparagine 153 is a glycosylation site (N-linked (GlcNAc...) asparagine). The helical transmembrane segment at 156-176 (AGHGLLVELIITFQLVFTIFA) threads the bilayer. Topologically, residues 177–184 (SCDSKRTD) are cytoplasmic. Position 180 is a phosphoserine; by PKC (serine 180). The helical transmembrane segment at 185-205 (VTGSVALAIGFSVAIGHLFAI) threads the bilayer. Topologically, residues 206–208 (NYT) are extracellular. Positions 209 to 222 (GASMNPARSFGPAV) form an intramembrane region, discontinuously helical. The NPA 2 signature appears at 213-215 (NPA). Topologically, residues 223-231 (IMGNWENHW) are extracellular. The helical transmembrane segment at 232–252 (IYWVGPIIGAVLAGALYEYVF) threads the bilayer. At 253–323 (CPDVELKRRL…DSSGEVLSSV (71 aa)) the chain is on the cytoplasmic side. Phosphoserine is present on residues serine 276 and serine 285. Threonine 289 carries the post-translational modification Phosphothreonine. Serine 321 is modified (phosphoserine).

This sequence belongs to the MIP/aquaporin (TC 1.A.8) family. In terms of assembly, homotetramer. The tetramers can form oligomeric arrays in membranes. The size of the oligomers differs between tissues and is smaller in skeletal muscle than in brain. Interaction between AQP4 oligomeric arrays in close-by cells can contribute to cell-cell adhesion. Part of a complex containing MLC1, TRPV4, HEPACAM and ATP1B1. In terms of processing, phosphorylation by PKC at Ser-180 promotes internalization from the cell membrane, reducing the conductance by 50%. Phosphorylation by PKG at Ser-111 in response to glutamate increases conductance by 40%. Isoform Long: Palmitoylated on its N-terminal region. Isoform 3: Not palmitoylated. Detected in cerebellum. Detected on pericapillary astrocyte endfeet in cerebellum, and in skeletal muscle. Detected in glial lamellae in the hypothalamus (at protein level). Abundant in mature brain cortex, cerebellum and spinal cord. Highly expressed in the ependymal cell lining the aqueductal system and over the space of the brain in contact with the subarachnoid space. Detected in paraventricular and supraoptic nuclei, the granule cell layer of the dentate gyrus and the Purkinje cell layer in the cerebellum. Only weakly detectable in eye, kidney, intestine, and lung.

It is found in the cell membrane. The protein localises to the basolateral cell membrane. The protein resides in the endosome membrane. Its subcellular location is the sarcolemma. It localises to the cell projection. It carries out the reaction H2O(in) = H2O(out). Functionally, forms a water-specific channel. Plays an important role in brain water homeostasis and in glymphatic solute transport. Required for a normal rate of water exchange across the blood brain interface. Required for normal levels of cerebrospinal fluid influx into the brain cortex and parenchyma along paravascular spaces that surround penetrating arteries, and for normal drainage of interstitial fluid along paravenous drainage pathways. Thereby, it is required for normal clearance of solutes from the brain interstitial fluid, including soluble beta-amyloid peptides derived from APP. Plays a redundant role in urinary water homeostasis and urinary concentrating ability. The protein is Aquaporin-4 (Aqp4) of Rattus norvegicus (Rat).